We begin with the raw amino-acid sequence, 398 residues long: Cytochrome b561 and DOMON domain-containing protein At3g61750 (398 aa).

The N-terminal stretch at 1-23 is a signal peptide; sequence MKTLVGFYILCFLIGQDLPFLAA. Positions 64-177 constitute a DOMON domain; the sequence is NTFVLRYSEN…PRRAVILAFS (114 aa). Residues 184–377 enclose the Cytochrome b561 domain; that stretch reads LGRLTKHDDK…LEIFRIRGTI (194 aa). His220 serves as a coordination point for heme b. A run of 2 helical transmembrane segments spans residues 222–242 and 252–272; these read VMAI…ARYL and LHIG…ILGI. Heme b is bound by residues His253 and His285. The next 3 helical transmembrane spans lie at 287 to 307, 320 to 340, and 351 to 371; these read GIGI…FARP, YHHW…VLGI, and KIGY…LEIF. Residue His321 coordinates heme b.

The cofactor is heme b.

The protein localises to the membrane. May act as a catecholamine-responsive trans-membrane electron transporter. In Arabidopsis thaliana (Mouse-ear cress), this protein is Cytochrome b561 and DOMON domain-containing protein At3g61750.